A 217-amino-acid chain; its full sequence is NAD(P)H-hydrate epimerase (217 aa).

Positions 1-217 (MRAIENAAMA…VAVADIGLSS (217 aa)) constitute a YjeF N-terminal domain. Residue 48 to 52 (NNGGD) coordinates (6S)-NADPHX. K(+)-binding residues include Asn49 and Asp127. (6S)-NADPHX is bound by residues 131 to 137 (GIGQTRP) and Asp165. K(+) is bound at residue Thr168.

Belongs to the NnrE/AIBP family. K(+) is required as a cofactor.

It carries out the reaction (6R)-NADHX = (6S)-NADHX. It catalyses the reaction (6R)-NADPHX = (6S)-NADPHX. Catalyzes the epimerization of the S- and R-forms of NAD(P)HX, a damaged form of NAD(P)H that is a result of enzymatic or heat-dependent hydration. This is a prerequisite for the S-specific NAD(P)H-hydrate dehydratase to allow the repair of both epimers of NAD(P)HX. The chain is NAD(P)H-hydrate epimerase from Cereibacter sphaeroides (strain KD131 / KCTC 12085) (Rhodobacter sphaeroides).